We begin with the raw amino-acid sequence, 488 residues long: N-succinylglutamate 5-semialdehyde dehydrogenase (488 aa).

221-226 is an NAD(+) binding site; the sequence is GSSRTG. Catalysis depends on residues Glu244 and Cys278.

The protein belongs to the aldehyde dehydrogenase family. AstD subfamily.

It catalyses the reaction N-succinyl-L-glutamate 5-semialdehyde + NAD(+) + H2O = N-succinyl-L-glutamate + NADH + 2 H(+). It participates in amino-acid degradation; L-arginine degradation via AST pathway; L-glutamate and succinate from L-arginine: step 4/5. In terms of biological role, catalyzes the NAD-dependent reduction of succinylglutamate semialdehyde into succinylglutamate. The sequence is that of N-succinylglutamate 5-semialdehyde dehydrogenase from Pseudomonas fluorescens (strain Pf0-1).